Consider the following 324-residue polypeptide: Uroporphyrinogen decarboxylase (324 aa).

Substrate-binding positions include 14 to 18, Phe32, Asp63, Tyr136, Ser191, and His302; that span reads RQAGR.

The protein belongs to the uroporphyrinogen decarboxylase family. As to quaternary structure, homodimer.

Its subcellular location is the cytoplasm. It carries out the reaction uroporphyrinogen III + 4 H(+) = coproporphyrinogen III + 4 CO2. Its pathway is porphyrin-containing compound metabolism; protoporphyrin-IX biosynthesis; coproporphyrinogen-III from 5-aminolevulinate: step 4/4. Its function is as follows. Catalyzes the decarboxylation of four acetate groups of uroporphyrinogen-III to yield coproporphyrinogen-III. The polypeptide is Uroporphyrinogen decarboxylase (Neorickettsia sennetsu (strain ATCC VR-367 / Miyayama) (Ehrlichia sennetsu)).